Reading from the N-terminus, the 119-residue chain is Holo-[acyl-carrier-protein] synthase (119 aa).

Mg(2+) is bound by residues Asp-7 and Glu-53.

Belongs to the P-Pant transferase superfamily. AcpS family. The cofactor is Mg(2+).

The protein resides in the cytoplasm. The enzyme catalyses apo-[ACP] + CoA = holo-[ACP] + adenosine 3',5'-bisphosphate + H(+). Its function is as follows. Transfers the 4'-phosphopantetheine moiety from coenzyme A to a Ser of acyl-carrier-protein. This Dehalococcoides mccartyi (strain ATCC BAA-2266 / KCTC 15142 / 195) (Dehalococcoides ethenogenes (strain 195)) protein is Holo-[acyl-carrier-protein] synthase.